Consider the following 80-residue polypeptide: Dermaseptin-A5 (80 aa).

The signal sequence occupies residues 1-22; that stretch reads MAFLKKSLFLVLFLGLVSLSIC. A propeptide spanning residues 23–43 is cleaved from the precursor; that stretch reads EEEKRENEDEEEQEDDEQSEM. Residues 24–45 form a disordered region; that stretch reads EEKRENEDEEEQEDDEQSEMKR. Residues 30–40 show a composition bias toward acidic residues; sequence EDEEEQEDDEQ. A Valine amide modification is found at valine 77. Residues 79 to 80 constitute a propeptide that is removed on maturation; the sequence is EQ.

This sequence belongs to the frog skin active peptide (FSAP) family. Dermaseptin subfamily. As to expression, expressed by the skin glands.

The protein resides in the secreted. Its function is as follows. Possesses a potent antimicrobial activity against Gram-positive and Gram-negative bacteria. Probably acts by disturbing membrane functions with its amphipathic structure. This Agalychnis annae (Blue-sided leaf frog) protein is Dermaseptin-A5.